We begin with the raw amino-acid sequence, 93 residues long: MDSLRKMLISVAMLGAGAGVGYALLVIVTPGERRKQEMLKEMPLQDPRSREEAARTQQLLLATLQEAATTQENVAWRKNWMVGGEGGAGGRSP.

Residues 1–7 lie on the Mitochondrial matrix side of the membrane; sequence MDSLRKM. A helical transmembrane segment spans residues 8–28; that stretch reads LISVAMLGAGAGVGYALLVIV. Residues 23–80 form a mediates lipid-binding region; that stretch reads ALLVIVTPGERRKQEMLKEMPLQDPRSREEAARTQQLLLATLQEAATTQENVAWRKNW. Topologically, residues 29–93 are mitochondrial intermembrane; the sequence is TPGERRKQEM…GEGGAGGRSP (65 aa).

This sequence belongs to the UQCC3 family. As to quaternary structure, associates with the ubiquinol-cytochrome c reductase complex (mitochondrial respiratory chain complex III or cytochrome b-c1 complex). Interacts with UQCC1. Forms a complex, named COMC, composed of UQCC1, UQCC2; UQCC3 and UQCC4; mediates MT-CYB hemylation and association with the first nuclear-encoded complex III subunit UQCRQ. Post-translationally, probably cleaved by OMA1 under mitochondrial stress conditions.

The protein localises to the mitochondrion inner membrane. Its function is as follows. Required for the assembly of the ubiquinol-cytochrome c reductase complex (mitochondrial respiratory chain complex III or cytochrome b-c1 complex), mediating cytochrome b recruitment and probably stabilization within the complex. Thereby, plays an important role in ATP production by mitochondria. Cardiolipin-binding protein, it may also control the cardiolipin composition of mitochondria membranes and their morphology. This is Ubiquinol-cytochrome-c reductase complex assembly factor 3 from Homo sapiens (Human).